The primary structure comprises 264 residues: Sexual differentiation protein ste4 (264 aa).

One can recognise an SAM domain in the interval 11–73; that stretch reads WNNEAVCNWI…LSAIQSMKKQ (63 aa). The interval 111–139 is leucine-zipper; it reads LEKRVEYLETENTKLVKTLNSLNSEFLQL. Residues 176-264 form the Ras-associating domain; sequence GSFDLEVNDS…PSFVLSRRSC (89 aa).

Homodimer or heterodimer with another leucine-zipper protein.

In terms of biological role, essential for mating and meiosis. The polypeptide is Sexual differentiation protein ste4 (ste4) (Schizosaccharomyces pombe (strain 972 / ATCC 24843) (Fission yeast)).